Consider the following 239-residue polypeptide: Proteasome subunit beta type-6 (239 aa).

Position 2 is an N-acetylalanine (Ala-2). Positions 2–34 (AATLVAARGTRPAPAWGPEAIAPDWENREVSTG) are cleaved as a propeptide — removed in mature form. Thr-35 functions as the Nucleophile in the catalytic mechanism. Position 69 is a phosphothreonine (Thr-69).

The protein belongs to the peptidase T1B family. In terms of assembly, the 26S proteasome consists of a 20S proteasome core and two 19S regulatory subunits. The 20S proteasome core is a barrel-shaped complex made of 28 subunits that are arranged in four stacked rings. The two outer rings are each formed by seven alpha subunits, and the two inner rings are formed by seven beta subunits. The proteolytic activity is exerted by three beta-subunits PSMB5, PSMB6 and PSMB7.

Its subcellular location is the cytoplasm. The protein localises to the nucleus. It carries out the reaction Cleavage of peptide bonds with very broad specificity.. Its function is as follows. Component of the 20S core proteasome complex involved in the proteolytic degradation of most intracellular proteins. This complex plays numerous essential roles within the cell by associating with different regulatory particles. Associated with two 19S regulatory particles, forms the 26S proteasome and thus participates in the ATP-dependent degradation of ubiquitinated proteins. The 26S proteasome plays a key role in the maintenance of protein homeostasis by removing misfolded or damaged proteins that could impair cellular functions, and by removing proteins whose functions are no longer required. Associated with the PA200 or PA28, the 20S proteasome mediates ubiquitin-independent protein degradation. This type of proteolysis is required in several pathways including spermatogenesis (20S-PA200 complex) or generation of a subset of MHC class I-presented antigenic peptides (20S-PA28 complex). Within the 20S core complex, PSMB6 displays a peptidylglutamyl-hydrolyzing activity also termed postacidic or caspase-like activity, meaning that the peptides bond hydrolysis occurs directly after acidic residues. The protein is Proteasome subunit beta type-6 (PSMB6) of Bos taurus (Bovine).